We begin with the raw amino-acid sequence, 542 residues long: CTP synthase (542 aa).

The amidoligase domain stretch occupies residues 1–265; sequence MARYVFITGG…DSEVLSAFGI (265 aa). Position 13 (serine 13) interacts with CTP. A UTP-binding site is contributed by serine 13. 14–19 serves as a coordination point for ATP; it reads SLGKGI. Tyrosine 54 lines the L-glutamine pocket. Aspartate 71 is an ATP binding site. Aspartate 71 and glutamate 139 together coordinate Mg(2+). CTP contacts are provided by residues 146–148, 186–191, and lysine 222; these read DIE and KTKPTQ. Residues 186–191 and lysine 222 contribute to the UTP site; that span reads KTKPTQ. The region spanning 291-541 is the Glutamine amidotransferase type-1 domain; it reads TIAVVGKYTG…IEAAIEQSRL (251 aa). Glycine 353 contacts L-glutamine. Cysteine 380 serves as the catalytic Nucleophile; for glutamine hydrolysis. Residues 381-384, glutamate 404, and arginine 469 each bind L-glutamine; that span reads FGMQ. Residues histidine 514 and glutamate 516 contribute to the active site.

This sequence belongs to the CTP synthase family. In terms of assembly, homotetramer.

The catalysed reaction is UTP + L-glutamine + ATP + H2O = CTP + L-glutamate + ADP + phosphate + 2 H(+). The enzyme catalyses L-glutamine + H2O = L-glutamate + NH4(+). It carries out the reaction UTP + NH4(+) + ATP = CTP + ADP + phosphate + 2 H(+). It participates in pyrimidine metabolism; CTP biosynthesis via de novo pathway; CTP from UDP: step 2/2. With respect to regulation, allosterically activated by GTP, when glutamine is the substrate; GTP has no effect on the reaction when ammonia is the substrate. The allosteric effector GTP functions by stabilizing the protein conformation that binds the tetrahedral intermediate(s) formed during glutamine hydrolysis. Inhibited by the product CTP, via allosteric rather than competitive inhibition. Functionally, catalyzes the ATP-dependent amination of UTP to CTP with either L-glutamine or ammonia as the source of nitrogen. Regulates intracellular CTP levels through interactions with the four ribonucleotide triphosphates. The protein is CTP synthase of Brucella melitensis biotype 2 (strain ATCC 23457).